Reading from the N-terminus, the 569-residue chain is Methionine--tRNA ligase (569 aa).

The 'HIGH' region signature appears at 11-21 (PYINGVKHLGN). Residues C143, C146, C156, and C159 each coordinate Zn(2+). The 'KMSKS' region signature appears at 342–346 (KFSTS). T345 is a binding site for ATP.

The protein belongs to the class-I aminoacyl-tRNA synthetase family. MetG type 1 subfamily. Monomer. Zn(2+) serves as cofactor.

The protein resides in the cytoplasm. The catalysed reaction is tRNA(Met) + L-methionine + ATP = L-methionyl-tRNA(Met) + AMP + diphosphate. Is required not only for elongation of protein synthesis but also for the initiation of all mRNA translation through initiator tRNA(fMet) aminoacylation. The sequence is that of Methionine--tRNA ligase from Caulobacter sp. (strain K31).